A 312-amino-acid chain; its full sequence is Tyrosine recombinase XerC (312 aa).

The 103-residue stretch at Met1–Val103 folds into the Core-binding (CB) domain. A Tyr recombinase domain is found at Glu124–Gln306. Catalysis depends on residues Arg164, Lys188, His258, Arg261, and His284. Catalysis depends on Tyr293, which acts as the O-(3'-phospho-DNA)-tyrosine intermediate.

This sequence belongs to the 'phage' integrase family. XerC subfamily. In terms of assembly, forms a cyclic heterotetrameric complex composed of two molecules of XerC and two molecules of XerD.

It is found in the cytoplasm. Its function is as follows. Site-specific tyrosine recombinase, which acts by catalyzing the cutting and rejoining of the recombining DNA molecules. The XerC-XerD complex is essential to convert dimers of the bacterial chromosome into monomers to permit their segregation at cell division. It also contributes to the segregational stability of plasmids. The protein is Tyrosine recombinase XerC of Chlamydia pneumoniae (Chlamydophila pneumoniae).